The sequence spans 170 residues: Ergosterol biosynthetic protein 28 (170 aa).

A run of 3 helical transmembrane segments spans residues 7–27, 116–136, and 141–161; these read FLPE…IISI, TLAY…LFVF, and FGLP…WMPL.

The protein belongs to the ERG28 family. In terms of assembly, heterotetramer of ERG25, ERG26, ERG27 and ERG28. ERG28 acts as a scaffold to tether ERG27 and other 4,4-demethylation-related enzymes, forming a demethylation enzyme complex, in the endoplasmic reticulum.

Its subcellular location is the endoplasmic reticulum membrane. It participates in steroid metabolism; ergosterol biosynthesis. Functionally, sterol 24-C-methyltransferase; part of the third module of ergosterol biosynthesis pathway that includes the late steps of the pathway. ERG28 has a role as a scaffold to help anchor the catalytic components of the C-4 demethylation complex ERG25, ERG26 and ERG27 to the endoplasmic reticulum. The third module or late pathway involves the ergosterol synthesis itself through consecutive reactions that mainly occur in the endoplasmic reticulum (ER) membrane. Firstly, the squalene synthase ERG9 catalyzes the condensation of 2 farnesyl pyrophosphate moieties to form squalene, which is the precursor of all steroids. Squalene synthase is crucial for balancing the incorporation of farnesyl diphosphate (FPP) into sterol and nonsterol isoprene synthesis. Secondly, squalene is converted into lanosterol by the consecutive action of the squalene epoxidase ERG1 and the lanosterol synthase ERG7. Then, the delta(24)-sterol C-methyltransferase ERG6 methylates lanosterol at C-24 to produce eburicol. Eburicol is the substrate of the sterol 14-alpha demethylase encoded by CYP51A, CYP51B and CYP51C, to yield 4,4,24-trimethyl ergosta-8,14,24(28)-trienol. CYP51B encodes the enzyme primarily responsible for sterol 14-alpha-demethylation, and plays an essential role in ascospore formation. CYP51A encodes an additional sterol 14-alpha-demethylase, induced on ergosterol depletion and responsible for the intrinsic variation in azole sensitivity. The third CYP51 isoform, CYP51C, does not encode a sterol 14-alpha-demethylase, but is required for full virulence on host wheat ears. The C-14 reductase ERG24 then reduces the C14=C15 double bond which leads to 4,4-dimethylfecosterol. A sequence of further demethylations at C-4, involving the C-4 demethylation complex containing the C-4 methylsterol oxidases ERG25, the sterol-4-alpha-carboxylate 3-dehydrogenase ERG26 and the 3-keto-steroid reductase ERG27, leads to the production of fecosterol via 4-methylfecosterol. ERG28 has a role as a scaffold to help anchor ERG25, ERG26 and ERG27 to the endoplasmic reticulum. The C-8 sterol isomerase ERG2 then catalyzes the reaction which results in unsaturation at C-7 in the B ring of sterols and thus converts fecosterol to episterol. The sterol-C5-desaturases ERG3A and ERG3BB then catalyze the introduction of a C-5 double bond in the B ring to produce 5-dehydroepisterol. The C-22 sterol desaturases ERG5A and ERG5B further convert 5-dehydroepisterol into ergosta-5,7,22,24(28)-tetraen-3beta-ol by forming the C-22(23) double bond in the sterol side chain. Finally, ergosta-5,7,22,24(28)-tetraen-3beta-ol is substrate of the C-24(28) sterol reductase ERG4 to produce ergosterol. This Gibberella zeae (strain ATCC MYA-4620 / CBS 123657 / FGSC 9075 / NRRL 31084 / PH-1) (Wheat head blight fungus) protein is Ergosterol biosynthetic protein 28.